We begin with the raw amino-acid sequence, 374 residues long: Putative C-&gt;U-editing enzyme APOBEC-4 (374 aa).

Residues 60–176 (PQTKHLTFYE…AWNRKALQSL (117 aa)) enclose the CMP/dCMP-type deaminase domain. His-92 contacts Zn(2+). Glu-94 functions as the Proton donor in the catalytic mechanism. Positions 126 and 133 each coordinate Zn(2+). The interval 259-280 (EKHPLGSAAPAQRQPTRGQDPR) is disordered.

Belongs to the cytidine and deoxycytidylate deaminase family. The cofactor is Zn(2+). Predominantly expressed in testis.

Functionally, putative C to U editing enzyme whose physiological substrate is not yet known. This is Putative C-&gt;U-editing enzyme APOBEC-4 (Apobec4) from Mus musculus (Mouse).